Here is a 204-residue protein sequence, read N- to C-terminus: Holliday junction branch migration complex subunit RuvA (204 aa).

The tract at residues Met-1–Met-64 is domain I. The segment at Thr-65–Gly-143 is domain II. The flexible linker stretch occupies residues Leu-144–Gly-151. The domain III stretch occupies residues Val-152 to Arg-204.

The protein belongs to the RuvA family. As to quaternary structure, homotetramer. Forms an RuvA(8)-RuvB(12)-Holliday junction (HJ) complex. HJ DNA is sandwiched between 2 RuvA tetramers; dsDNA enters through RuvA and exits via RuvB. An RuvB hexamer assembles on each DNA strand where it exits the tetramer. Each RuvB hexamer is contacted by two RuvA subunits (via domain III) on 2 adjacent RuvB subunits; this complex drives branch migration. In the full resolvosome a probable DNA-RuvA(4)-RuvB(12)-RuvC(2) complex forms which resolves the HJ.

The protein resides in the cytoplasm. The RuvA-RuvB-RuvC complex processes Holliday junction (HJ) DNA during genetic recombination and DNA repair, while the RuvA-RuvB complex plays an important role in the rescue of blocked DNA replication forks via replication fork reversal (RFR). RuvA specifically binds to HJ cruciform DNA, conferring on it an open structure. The RuvB hexamer acts as an ATP-dependent pump, pulling dsDNA into and through the RuvAB complex. HJ branch migration allows RuvC to scan DNA until it finds its consensus sequence, where it cleaves and resolves the cruciform DNA. This is Holliday junction branch migration complex subunit RuvA from Rhizobium johnstonii (strain DSM 114642 / LMG 32736 / 3841) (Rhizobium leguminosarum bv. viciae).